The chain runs to 307 residues: Glycine--tRNA ligase alpha subunit (307 aa).

This sequence belongs to the class-II aminoacyl-tRNA synthetase family. As to quaternary structure, tetramer of two alpha and two beta subunits.

The protein resides in the cytoplasm. It carries out the reaction tRNA(Gly) + glycine + ATP = glycyl-tRNA(Gly) + AMP + diphosphate. The chain is Glycine--tRNA ligase alpha subunit (glyQ) from Xylella fastidiosa (strain 9a5c).